The sequence spans 260 residues: tRNA pseudouridine synthase C (260 aa).

D54 is an active-site residue.

The protein belongs to the pseudouridine synthase RluA family.

The catalysed reaction is uridine(65) in tRNA = pseudouridine(65) in tRNA. Responsible for synthesis of pseudouridine from uracil-65 in transfer RNAs. The protein is tRNA pseudouridine synthase C (truC) of Escherichia coli O6:H1 (strain CFT073 / ATCC 700928 / UPEC).